Here is a 206-residue protein sequence, read N- to C-terminus: Probable glutathione S-transferase 8 (206 aa).

One can recognise a GST N-terminal domain in the interval valine 2 to glycine 79. Residues tyrosine 8, tryptophan 39, lysine 43, glycine 49–leucine 51, and glutamine 63–serine 64 contribute to the glutathione site. The GST C-terminal domain maps to cysteine 81–phenylalanine 206.

The protein belongs to the GST superfamily. Sigma family.

The enzyme catalyses RX + glutathione = an S-substituted glutathione + a halide anion + H(+). Functionally, conjugation of reduced glutathione to a wide number of exogenous and endogenous hydrophobic electrophiles. In Caenorhabditis elegans, this protein is Probable glutathione S-transferase 8 (gst-8).